We begin with the raw amino-acid sequence, 451 residues long: 2,4-dinitrotoluene dioxygenase system, large oxygenase component (451 aa).

In terms of domain architecture, Rieske spans 42 to 126; it reads WLFLTHDSLI…LQSVPFEKEL (85 aa). 4 residues coordinate [2Fe-2S] cluster: Cys84, His86, Cys104, and His107. Residues His211, His216, and Asp365 each coordinate Fe cation.

The protein belongs to the bacterial ring-hydroxylating dioxygenase alpha subunit family. In terms of assembly, the 2,4-dinitrotoluene dioxygenase (DNTDO) multicomponent enzyme system is composed of an electron transfer component and a dioxygenase component (iron sulfur protein (ISP)). The electron transfer component is composed of a ferredoxin reductase (DntAa) and a ferredoxin (DntAb), and the dioxygenase component is formed of a large alpha subunit (DntAc) and a small beta subunit (DntAd). [2Fe-2S] cluster is required as a cofactor. Requires Fe(2+) as cofactor.

It catalyses the reaction 2,4-dinitrotoluene + NADH + O2 = 4-methyl-5-nitrocatechol + nitrite + NAD(+). Functionally, component of the 2,4-dinitrotoluene dioxygenase (DNTDO) multicomponent enzyme system which catalyzes the incorporation of both atoms of molecular oxygen into 2,4-dinitrotoluene (DNT) to form 4-methyl-5-nitrocatechol (MNC) and nitrite. The alpha subunit has a catalytic role in the holoenzyme. Also able to convert naphthalene to cis-(1R,2S)-dihydroxy-1,2-dihydronaphthalene. This Burkholderia sp. (strain RASC) protein is 2,4-dinitrotoluene dioxygenase system, large oxygenase component.